The sequence spans 369 residues: Core-capsid bridging protein (369 aa).

Residues 15 to 50 (APEIYGPPKKEEQDYKPRKLKRVKKKKKDDDDDELD) form a disordered region. Basic and acidic residues predominate over residues 22-31 (PKKEEQDYKP). Residues 32 to 41 (RKLKRVKKKK) are compositionally biased toward basic residues. At threonine 85 the chain carries Phosphothreonine; by host. Residue serine 166 is modified to Phosphoserine; by host. The disordered stretch occupies residues 307-342 (PGYRGYTYRPRRRATTRRRTTTGTRRRRRRRQPVLA). Over residues 315 to 338 (RPRRRATTRRRTTTGTRRRRRRRQ) the composition is skewed to basic residues.

This sequence belongs to the adenoviridae core-capsid bridging protein family. As to quaternary structure, monomer. Homodimer. Exists in equilibrium between monomers and dimers in solution. Interacts with the histone-like nucleoprotein; this interactions bridge the virus core to the capsid. Interacts with core protein X; this interactions bridge the virus core to the capsid. Interacts with the endosome lysis protein VI; this interactions bridge the virus core to the capsid. Interacts with the peripentonal hexons. Interacts with host NPM1; this interaction might play a role in virus assembly.

Its subcellular location is the virion. It localises to the host nucleus. The protein resides in the host nucleolus. Functionally, associates loosely with the viral DNA to form an outer shell around the nucleoprotein-DNA complex and links it with the capsid by binding the endosome lysis protein. Dissociates from the viral genome during entry. Might be involved in nuclear capsid assembly of the viral particles through its association with NPM1/nucleophosmin. This Homo sapiens (Human) protein is Core-capsid bridging protein.